A 129-amino-acid chain; its full sequence is NADH-quinone oxidoreductase subunit A (129 aa).

A run of 3 helical transmembrane segments spans residues 14–34 (LAIHVALSAGIVAAIIVVAAL), 67–87 (FLIAALFVIFDMEVAILFAWA), and 95–115 (WFGLIEAAVFIGVLLLALVYL).

The protein belongs to the complex I subunit 3 family. In terms of assembly, NDH-1 is composed of 14 different subunits. Subunits NuoA, H, J, K, L, M, N constitute the membrane sector of the complex.

It localises to the cell inner membrane. The enzyme catalyses a quinone + NADH + 5 H(+)(in) = a quinol + NAD(+) + 4 H(+)(out). In terms of biological role, NDH-1 shuttles electrons from NADH, via FMN and iron-sulfur (Fe-S) centers, to quinones in the respiratory chain. The immediate electron acceptor for the enzyme in this species is believed to be ubiquinone. Couples the redox reaction to proton translocation (for every two electrons transferred, four hydrogen ions are translocated across the cytoplasmic membrane), and thus conserves the redox energy in a proton gradient. The sequence is that of NADH-quinone oxidoreductase subunit A from Rhodopseudomonas palustris (strain HaA2).